The primary structure comprises 315 residues: Acetyl-coenzyme A carboxylase carboxyl transferase subunit alpha (315 aa).

The region spanning 32 to 293 is the CoA carboxyltransferase C-terminal domain; that stretch reads NISDEIARLQ…RADLVQQLDM (262 aa).

This sequence belongs to the AccA family. In terms of assembly, acetyl-CoA carboxylase is a heterohexamer composed of biotin carboxyl carrier protein (AccB), biotin carboxylase (AccC) and two subunits each of ACCase subunit alpha (AccA) and ACCase subunit beta (AccD).

It is found in the cytoplasm. The catalysed reaction is N(6)-carboxybiotinyl-L-lysyl-[protein] + acetyl-CoA = N(6)-biotinyl-L-lysyl-[protein] + malonyl-CoA. The protein operates within lipid metabolism; malonyl-CoA biosynthesis; malonyl-CoA from acetyl-CoA: step 1/1. In terms of biological role, component of the acetyl coenzyme A carboxylase (ACC) complex. First, biotin carboxylase catalyzes the carboxylation of biotin on its carrier protein (BCCP) and then the CO(2) group is transferred by the carboxyltransferase to acetyl-CoA to form malonyl-CoA. The protein is Acetyl-coenzyme A carboxylase carboxyl transferase subunit alpha of Pseudomonas putida (strain ATCC 47054 / DSM 6125 / CFBP 8728 / NCIMB 11950 / KT2440).